The sequence spans 332 residues: RNA polymerase II holoenzyme cyclin-like subunit (332 aa).

The Cyclin N-terminal domain occupies 74–175 (RIYCYFLIMK…LIEELQSYMI (102 aa)).

Belongs to the cyclin family. Cyclin C subfamily. In terms of assembly, component of the SRB8-11 complex, a regulatory module of the Mediator complex.

It is found in the nucleus. In terms of biological role, component of the SRB8-11 complex. The SRB8-11 complex is a regulatory module of the Mediator complex which is itself involved in regulation of basal and activated RNA polymerase II-dependent transcription. The SRB8-11 complex may be involved in the transcriptional repression of a subset of genes regulated by Mediator. It may inhibit the association of the Mediator complex with RNA polymerase II to form the holoenzyme complex. The SRB8-11 complex phosphorylates the C-terminal domain (CTD) of the largest subunit of RNA polymerase II. The polypeptide is RNA polymerase II holoenzyme cyclin-like subunit (SSN8) (Eremothecium gossypii (strain ATCC 10895 / CBS 109.51 / FGSC 9923 / NRRL Y-1056) (Yeast)).